Consider the following 327-residue polypeptide: Zinc transport protein ZntB (327 aa).

At 1 to 273 (MEAIKGADVN…ARRTYTMSLM (273 aa)) the chain is on the cytoplasmic side. A helical transmembrane segment spans residues 274–294 (AMVFLPSTFLTGLFGVNLGGI). Over 295-300 (PGGGWR) the chain is Periplasmic. Residues 301–321 (FGFSLFCILLVVLIGGVALWL) form a helical membrane-spanning segment. Residues 322 to 327 (HRSKWL) are Cytoplasmic-facing.

This sequence belongs to the CorA metal ion transporter (MIT) (TC 1.A.35) family.

Its subcellular location is the cell inner membrane. The catalysed reaction is Zn(2+)(out) + H(+)(out) = Zn(2+)(in) + H(+)(in). Its function is as follows. Zinc transporter. Acts as a Zn(2+):proton symporter, which likely mediates zinc ion uptake. The sequence is that of Zinc transport protein ZntB from Escherichia fergusonii (strain ATCC 35469 / DSM 13698 / CCUG 18766 / IAM 14443 / JCM 21226 / LMG 7866 / NBRC 102419 / NCTC 12128 / CDC 0568-73).